The following is a 788-amino-acid chain: Cell division cycle protein 27 homolog (788 aa).

Residues Tyr-198–Asn-436 form a disordered region. The segment covering Gly-217 to Pro-229 has biased composition (low complexity). 3 stretches are compositionally biased toward polar residues: residues Arg-241–Asn-273, Ser-293–Phe-303, and Asn-319–Arg-360. Residues Ala-366–Thr-378 show a composition bias toward low complexity. Positions Val-391–Glu-414 are enriched in polar residues. 5 TPR repeats span residues Pro-561–Phe-594, Tyr-596–Asp-628, Tyr-629–Asn-662, Ala-664–Asp-696, and Ala-731–Gly-764.

Belongs to the APC3/CDC27 family. The APC/C complex is probably composed of at least 12 subunits: apc-2, apc-10, apc-11, cdc-26, emb-1, emb-27, emb-30, mat-1, mat-2, mat-3, such-1 and gfi-3. Expressed in the ventral nerve cord.

The protein localises to the nucleus. It functions in the pathway protein modification; protein ubiquitination. In terms of biological role, probable component of the anaphase promoting complex/cyclosome (APC/C), a cell cycle-regulated E3 ubiquitin ligase that controls progression through mitosis and the G1 phase of the cell cycle. The APC/C complex acts by mediating ubiquitination and subsequent degradation of target proteins. Developmental role in early embryogenesis and the metaphase to anaphase transition in oocyte and spermatocyte meiosis and mitosis in germ cells. Required for embryonic anterior-posterior axis formation. Plays a role in regulating the abundance of glr-1 receptors in postmitotic neurons, which may in turn control animal locomotion. The protein is Cell division cycle protein 27 homolog of Caenorhabditis elegans.